Reading from the N-terminus, the 585-residue chain is Arginine--tRNA ligase (585 aa).

The 'HIGH' region motif lies at 131-141 (ANPTGPMHVGH).

Belongs to the class-I aminoacyl-tRNA synthetase family. In terms of assembly, monomer.

The protein localises to the cytoplasm. The enzyme catalyses tRNA(Arg) + L-arginine + ATP = L-arginyl-tRNA(Arg) + AMP + diphosphate. This chain is Arginine--tRNA ligase, found in Chelativorans sp. (strain BNC1).